Reading from the N-terminus, the 205-residue chain is Large ribosomal subunit protein uL4 (205 aa).

Residues 47–70 are disordered; it reads TRAQKSRAEVSGGGKKPFRQKGTG.

This sequence belongs to the universal ribosomal protein uL4 family. In terms of assembly, part of the 50S ribosomal subunit.

In terms of biological role, one of the primary rRNA binding proteins, this protein initially binds near the 5'-end of the 23S rRNA. It is important during the early stages of 50S assembly. It makes multiple contacts with different domains of the 23S rRNA in the assembled 50S subunit and ribosome. Functionally, forms part of the polypeptide exit tunnel. The protein is Large ribosomal subunit protein uL4 of Acinetobacter baylyi (strain ATCC 33305 / BD413 / ADP1).